The primary structure comprises 147 residues: MVHFTAEEKAVITSLWGKVNVEEAGGEALGRLLVVYPWTQRFFDNFGNLSSASAIMGNPKVKAHGKKVLTSLGDAIKNMDDLKGTFAHLSELHCDRLHVDPENFKLLGNELVIVLAKYFGKEFTPQVQAAWQKMVAGVAIALAHKYH.

Positions 3–147 (HFTAEEKAVI…VAIALAHKYH (145 aa)) constitute a Globin domain. The heme b site is built by H64 and H93.

This sequence belongs to the globin family. Heterotetramer of two alpha chains and two gamma chains in fetal hemoglobin (Hb F). In terms of tissue distribution, red blood cells.

Its function is as follows. Gamma chains make up the fetal hemoglobin F, in combination with alpha chains. The protein is Hemoglobin subunit gamma (HBG) of Eulemur fulvus fulvus (Brown lemur).